The chain runs to 224 residues: UPF0758 protein VSAL_I0192 (224 aa).

An MPN domain is found at 102–224 (ALTSPEHTKR…IVSFAERGWI (123 aa)). Residues histidine 173, histidine 175, and aspartate 186 each coordinate Zn(2+). A JAMM motif motif is present at residues 173-186 (HNHPSGVAEPSQAD).

This sequence belongs to the UPF0758 family.

The sequence is that of UPF0758 protein VSAL_I0192 from Aliivibrio salmonicida (strain LFI1238) (Vibrio salmonicida (strain LFI1238)).